The sequence spans 235 residues: Large ribosomal subunit protein uL1 (235 aa).

It belongs to the universal ribosomal protein uL1 family. Part of the 50S ribosomal subunit.

In terms of biological role, binds directly to 23S rRNA. The L1 stalk is quite mobile in the ribosome, and is involved in E site tRNA release. Functionally, protein L1 is also a translational repressor protein, it controls the translation of the L11 operon by binding to its mRNA. This chain is Large ribosomal subunit protein uL1, found in Prochlorococcus marinus (strain MIT 9313).